Consider the following 173-residue polypeptide: Protein FAM180A (173 aa).

Residues 1–17 form the signal peptide; sequence MHWKMLLLLLLYYNAEA.

Belongs to the FAM180 family.

It localises to the secreted. In Homo sapiens (Human), this protein is Protein FAM180A (FAM180A).